The following is a 341-amino-acid chain: Phenylalanine--tRNA ligase alpha subunit (341 aa).

Glu-259 serves as a coordination point for Mg(2+).

It belongs to the class-II aminoacyl-tRNA synthetase family. Phe-tRNA synthetase alpha subunit type 1 subfamily. In terms of assembly, tetramer of two alpha and two beta subunits. Mg(2+) serves as cofactor.

Its subcellular location is the cytoplasm. It catalyses the reaction tRNA(Phe) + L-phenylalanine + ATP = L-phenylalanyl-tRNA(Phe) + AMP + diphosphate + H(+). The chain is Phenylalanine--tRNA ligase alpha subunit from Mycobacterium tuberculosis (strain ATCC 25177 / H37Ra).